The sequence spans 163 residues: UPF0416 protein RBE_1121 (163 aa).

The protein belongs to the UPF0416 family.

This Rickettsia bellii (strain RML369-C) protein is UPF0416 protein RBE_1121.